The sequence spans 412 residues: Non-specific lipid-transfer protein-like 2 (412 aa).

A Microbody targeting signal motif is present at residues 410–412 (SKI).

Belongs to the thiolase-like superfamily. Thiolase family. Expressed in intestine, hypodermis and body-wall muscle.

It is found in the peroxisome. It carries out the reaction choloyl-CoA + propanoyl-CoA = 3alpha,7alpha,12alpha-trihydroxy-24-oxo-5beta-cholestan-26-oyl-CoA + CoA. Inhibited by acetyl-CoA. Its function is as follows. Catalyzes the thiolytic cleavage of 3-ketoacyl-CoA with 8-16 carbon residues in the acyl group using a ping-pong mechanism whereby binding to 3-ketooctanoyl-CoA results in the release of acetyl-CoA and the subsequent addition of CoA produces 3-ketohexanohyl-CoA. Involved in the biosynthesis of the dauer pheromone by providing short chains of fatty acid that are attached to the ascarylose sugars of the pheromone. The chain is Non-specific lipid-transfer protein-like 2 from Caenorhabditis elegans.